The sequence spans 250 residues: 5'-nucleotidase SurE (250 aa).

Positions 8, 9, 39, and 91 each coordinate a divalent metal cation.

It belongs to the SurE nucleotidase family. A divalent metal cation serves as cofactor.

The protein resides in the cytoplasm. The catalysed reaction is a ribonucleoside 5'-phosphate + H2O = a ribonucleoside + phosphate. Nucleotidase that shows phosphatase activity on nucleoside 5'-monophosphates. This is 5'-nucleotidase SurE from Leptospira borgpetersenii serovar Hardjo-bovis (strain L550).